The sequence spans 421 residues: Probable N-acetylgalactosaminyltransferase 8 (421 aa).

Residues 1–3 are Cytoplasmic-facing; the sequence is MRR. A helical; Signal-anchor for type II membrane protein transmembrane segment spans residues 4–24; the sequence is HVVLSIFVFAGIVFAAEEAEK. Residues 25 to 421 are Lumenal-facing; the sequence is LPKCEHVDPY…ELEPKVHDEL (397 aa). N-linked (GlcNAc...) asparagine glycosylation is found at asparagine 52 and asparagine 58. 2 disulfide bridges follow: cysteine 98–cysteine 331 and cysteine 322–cysteine 399. A catalytic subdomain A region spans residues 106–219; sequence SYSTSVVVIH…ERWLEPLLQP (114 aa). Substrate-binding residues include aspartate 147 and arginine 180. Aspartate 203 provides a ligand contact to Mn(2+). Position 204 (serine 204) interacts with substrate. A Mn(2+)-binding site is contributed by histidine 205. Residues 277–339 form a catalytic subdomain B region; sequence PFNSPAMPGG…PCSRVGHVFR (63 aa). Residue tryptophan 308 participates in substrate binding. Histidine 336 provides a ligand contact to Mn(2+). Substrate is bound by residues arginine 339 and tyrosine 344. The short motif at 418-421 is the Prevents secretion from ER element; sequence HDEL.

It belongs to the glycosyltransferase 2 family. GalNAc-T subfamily. The cofactor is Mn(2+).

The protein localises to the golgi apparatus membrane. Its pathway is protein modification; protein glycosylation. Functionally, potential glycopeptide transferase involved in O-linked oligosaccharide biosynthesis. In contrast to other members of the family, it does not act as a peptide transferase that transfers GalNAc onto serine or threonine residue on peptides that have been tested. Some peptide transferase activity is however not excluded, considering that its appropriate peptide substrate may remain unidentified. This Caenorhabditis elegans protein is Probable N-acetylgalactosaminyltransferase 8 (gly-8).